Here is a 375-residue protein sequence, read N- to C-terminus: MASKPEKRVASSVFITLAPLRRDVAMAEEVRQAVCEARRGRPWEAPAPMKTPEAGLEGRPSPWTPPGRAAATVPAAPMQLSNGGCPPPPPVLDGEDALPDLDLFPPPPPPPPVLLPSEEEAPAPMGASLIADLEQLHLSPPLPPPPPQAPAERPSVQPSPLRPMEEELPPPPAERVEKGASTDICAFCHKTVSPRELAVEAMKRQYHAQCFTCRTCRRQLAGQSFYQKDGRPLCEPCYQDTLERCGKCGEVVRDHIIRALGQAFHPSCFTCVTCARCIGDESFALGSQNEVYCLDDFYRKFAPVCSICENPIIPRDGKDAFKIECMGRSFHENCYRCEDCRILLSVEPTDQGCYPLNNRLFCKPCHVKRSAAGCC.

The interval 1–70 (MASKPEKRVA…SPWTPPGRAA (70 aa)) is filamin-binding. 2 disordered regions span residues 43–119 (WEAP…PSEE) and 137–176 (HLSPPLPPPPPQAPAERPSVQPSPLRPMEEELPPPPAERV). 2 stretches are compositionally biased toward pro residues: residues 104-114 (FPPPPPPPPVL) and 140-149 (PPLPPPPPQA). Over residues 150–159 (PAERPSVQPS) the composition is skewed to low complexity. 3 LIM zinc-binding domains span residues 183 to 244 (DICA…TLER), 245 to 302 (CGKC…RKFA), and 303 to 372 (PVCS…RSAA). The FERMT2-binding stretch occupies residues 278-375 (IGDESFALGS…HVKRSAAGCC (98 aa)).

In terms of assembly, interacts with FERMT2, FLNA, FLNB and FLNC. Interacts with NKX2-5.

The protein resides in the cell junction. The protein localises to the focal adhesion. Its subcellular location is the cytoplasm. It is found in the cytoskeleton. It localises to the stress fiber. Functionally, serves as an anchoring site for cell-ECM adhesion proteins and filamin-containing actin filaments. Is implicated in cell shape modulation (spreading) and motility. May participate in the regulation of filamin-mediated cross-linking and stabilization of actin filaments. May also regulate the assembly of filamin-containing signaling complexes that control actin assembly. Promotes dissociation of FLNA from ITGB3 and ITGB7. Promotes activation of integrins and regulates integrin-mediated cell-cell adhesion. This Pongo abelii (Sumatran orangutan) protein is Filamin-binding LIM protein 1 (FBLIM1).